The sequence spans 219 residues: Elongation factor Ts (219 aa).

Residues 82 to 85 (TDFV) form an involved in Mg(2+) ion dislocation from EF-Tu region.

It belongs to the EF-Ts family.

It is found in the cytoplasm. Its function is as follows. Associates with the EF-Tu.GDP complex and induces the exchange of GDP to GTP. It remains bound to the aminoacyl-tRNA.EF-Tu.GTP complex up to the GTP hydrolysis stage on the ribosome. The sequence is that of Elongation factor Ts from Synechococcus sp. (strain CC9902).